Here is a 331-residue protein sequence, read N- to C-terminus: Putative mitochondrial 2-oxoglutarate/malate carrier protein (331 aa).

Solcar repeat units follow at residues 39–128 (VRAA…FMSR), 140–231 (VGFK…AKAQ), and 239–329 (SSKV…LGWL). Helical transmembrane passes span 42 to 62 (ALPF…IQPI), 103 to 121 (GLSA…RIGC), 148 to 168 (AGLA…LALI), 199 to 219 (GVAA…ALNF), 245 to 265 (LSAS…FDFV), and 309 to 329 (YVRI…LGWL).

Belongs to the mitochondrial carrier (TC 2.A.29) family.

It localises to the mitochondrion inner membrane. Functionally, catalyzes the transport of 2-oxoglutarate across the inner mitochondrial membrane. In Neurospora crassa (strain ATCC 24698 / 74-OR23-1A / CBS 708.71 / DSM 1257 / FGSC 987), this protein is Putative mitochondrial 2-oxoglutarate/malate carrier protein (mic-33).